The following is a 183-amino-acid chain: Ribosome maturation factor RimM (183 aa).

One can recognise a PRC barrel domain in the interval 104-183; sequence EGDYYWKDLM…TIEVDWDPGF (80 aa).

It belongs to the RimM family. In terms of assembly, binds ribosomal protein uS19.

Its subcellular location is the cytoplasm. In terms of biological role, an accessory protein needed during the final step in the assembly of 30S ribosomal subunit, possibly for assembly of the head region. Essential for efficient processing of 16S rRNA. May be needed both before and after RbfA during the maturation of 16S rRNA. It has affinity for free ribosomal 30S subunits but not for 70S ribosomes. In Salmonella arizonae (strain ATCC BAA-731 / CDC346-86 / RSK2980), this protein is Ribosome maturation factor RimM.